Here is a 621-residue protein sequence, read N- to C-terminus: Zinc metalloproteinase-disintegrin-like TSV-DM (621 aa).

An N-terminal signal peptide occupies residues 1–20 (MIQVLLVTICLAVFPYQGSS). The propeptide occupies 21-191 (IILESGNVND…EASQSNLTPE (171 aa)). At Gln192 the chain carries Pyrrolidone carboxylic acid. One can recognise a Peptidase M12B domain in the interval 200–396 (KYVKFFLVAD…NMPQCILKKP (197 aa)). N-linked (GlcNAc...) asparagine glycosylation is present at Asn219. 3 disulfides stabilise this stretch: Cys311/Cys391, Cys351/Cys375, and Cys353/Cys358. His336 provides a ligand contact to Zn(2+). Glu337 is an active-site residue. Residues His340 and His346 each contribute to the Zn(2+) site. The Disintegrin domain occupies 404 to 489 (PPVCGNYFVE…AECTDRFQRN (86 aa)). Ca(2+)-binding residues include Val406, Asn409, Phe411, Glu413, Glu416, and Asp419. 14 disulfide bridges follow: Cys407/Cys436, Cys418/Cys431, Cys420/Cys426, Cys430/Cys453, Cys444/Cys450, Cys449/Cys475, Cys462/Cys482, Cys469/Cys500, Cys493/Cys505, Cys512/Cys562, Cys527/Cys573, Cys540/Cys550, Cys557/Cys599, and Cys593/Cys605. A D/ECD-tripeptide motif is present at residues 468–470 (ECD). Residues Asp470, Met471, Asp473, Asp484, and Arg485 each contribute to the Ca(2+) site. Residue Asn502 is glycosylated (N-linked (GlcNAc...) asparagine).

The protein belongs to the venom metalloproteinase (M12B) family. P-III subfamily. P-IIIc sub-subfamily. As to quaternary structure, homodimer; disulfide-linked. Zn(2+) is required as a cofactor. The N-terminus is blocked. As to expression, expressed by the venom gland.

It localises to the secreted. With respect to regulation, inhibited by EDTA and DTT, and partially inhibited by EGTA, but not inhibited by PMSF and NEM. Snake venom zinc metalloprotease that hydrolyzes the alpha-chain (FGA) and more slowly the beta-chain (FGB) of fibrinogen. Inhibits cell proliferation and induces cell morphologic changes transiently on human umbilical vein endothelial cells. The sequence is that of Zinc metalloproteinase-disintegrin-like TSV-DM from Trimeresurus stejnegeri (Chinese green tree viper).